Consider the following 466-residue polypeptide: Argininosuccinate lyase (466 aa).

It belongs to the lyase 1 family. Argininosuccinate lyase subfamily.

It is found in the cytoplasm. The enzyme catalyses 2-(N(omega)-L-arginino)succinate = fumarate + L-arginine. It participates in amino-acid biosynthesis; L-arginine biosynthesis; L-arginine from L-ornithine and carbamoyl phosphate: step 3/3. This chain is Argininosuccinate lyase, found in Synechococcus sp. (strain ATCC 27144 / PCC 6301 / SAUG 1402/1) (Anacystis nidulans).